The chain runs to 178 residues: Actin-related protein 2/3 complex subunit 3-B (178 aa).

This sequence belongs to the ARPC3 family. Component of the Arp2/3 complex composed of actr2/arp2, actr3/arp3, arpc1 (arpc1a or arpc1b), arpc2, arpc3, arpc4 and arpc5.

The protein localises to the cytoplasm. The protein resides in the cytoskeleton. Its subcellular location is the cell projection. It is found in the nucleus. Functionally, component of the Arp2/3 complex, a multiprotein complex that mediates actin polymerization upon stimulation by nucleation-promoting factor (NPF). The Arp2/3 complex mediates the formation of branched actin networks in the cytoplasm, providing the force for cell motility. In addition to its role in the cytoplasmic cytoskeleton, the Arp2/3 complex also promotes actin polymerization in the nucleus, thereby regulating gene transcription and repair of damaged DNA. The Arp2/3 complex promotes homologous recombination (HR) repair in response to DNA damage by promoting nuclear actin polymerization, leading to drive motility of double-strand breaks (DSBs). The chain is Actin-related protein 2/3 complex subunit 3-B (arpc3-b) from Xenopus laevis (African clawed frog).